We begin with the raw amino-acid sequence, 72 residues long: Beta-defensin 104A (72 aa).

An N-terminal signal peptide occupies residues M1–S22. 3 disulfide bridges follow: C30–C57, C37–C51, and C41–C58.

The protein belongs to the beta-defensin family.

The protein localises to the secreted. Its function is as follows. Has antimicrobial activity. This chain is Beta-defensin 104A (DEFB104A), found in Gorilla gorilla gorilla (Western lowland gorilla).